Consider the following 498-residue polypeptide: uncharacterized protein (498 aa).

Residue 329–336 (GNPGTGKS) coordinates ATP.

It localises to the secreted. The protein resides in the cell wall. This is an uncharacterized protein from Mycobacterium tuberculosis (strain CDC 1551 / Oshkosh).